Here is a 1003-residue protein sequence, read N- to C-terminus: Glutamate receptor ionotropic, NMDA 3B (1003 aa).

The first 24 residues, 1–24, serve as a signal peptide directing secretion; sequence MECVQTLWLSLALALARGSWVVRG. At 25 to 574 the chain is on the extracellular side; it reads HPQPCGVPTR…PIGAFMWPLH (550 aa). N-linked (GlcNAc...) asparagine glycosylation is found at Asn69, Asn212, Asn344, Asn451, and Asn465. 2 disulfides stabilise this stretch: Cys439-Cys475 and Cys445-Cys476. Residues Ser531, Ser533, and Arg538 each contribute to the glycine site. D-serine-binding residues include Ser533 and Arg538. A helical transmembrane segment spans residues 575-594; the sequence is WSMWVGVFAALHLTALFLTL. Topologically, residues 595–615 are cytoplasmic; it reads YEWRSPYGLTPRGRNRGTVFS. Residues 616–627 constitute an intramembrane region (discontinuously helical); it reads YSSALNLCYAIL. Over 628–641 the chain is Cytoplasmic; it reads FGRTVSSKTPKCPT. A helical transmembrane segment spans residues 642–661; sequence GRFLMNLWAIFCLLVLSSYT. The Extracellular segment spans residues 662–832; it reads ANLAAVMVGD…TLQMGVYHLS (171 aa). Ser701 contacts glycine. Residues Ser701, Ala702, and Asp745 each contribute to the D-serine site. Position 745 (Asp745) interacts with glycine. The N-linked (GlcNAc...) asparagine glycan is linked to Asn786. The helical transmembrane segment at 833-848 threads the bilayer; sequence GLFVLLCLGLGSALLT. At 849–1003 the chain is on the cytoplasmic side; it reads SLGEHVFYRL…RLLHAAPAES (155 aa). A disordered region spans residues 883 to 912; the sequence is LNTGPPEGQQERAEQECSGPKEEQPAADGA. The span at 891-906 shows a compositional bias: basic and acidic residues; the sequence is QQERAEQECSGPKEEQ. A coiled-coil region spans residues 947–986; sequence SNGPGVQAELRELELRIEAARERLRSALLRRGELRAQLGD. The interval 952 to 985 is involved in the trafficking and surface expression of NMDARs; that stretch reads VQAELRELELRIEAARERLRSALLRRGELRAQLG.

The protein belongs to the glutamate-gated ion channel (TC 1.A.10.1) family. NR3B/GRIN3B subfamily. In terms of assembly, forms heterotetrameric channels that contain at least two GluN1 subunits and at least a combination of one GluN2 and one GluN3 subunits (in vitro). Forms heterotetrameric channels composed of two GluN1/zeta subunits (GRIN1), and two identical GluN3 subunits (GRIN3A or GRIN3B) (in vitro). Does not form functional homomeric channels. Expressed in the facial nucleus and the ambiguus nucleus of the brainstem, pons, medulla, spinal cord and cerebellum.

It is found in the cell membrane. The protein localises to the postsynaptic cell membrane. It carries out the reaction Ca(2+)(in) = Ca(2+)(out). The enzyme catalyses Na(+)(in) = Na(+)(out). Component of a non-conventional N-methyl-D-aspartate (NMDA) receptors (NMDARs) that function as heterotetrameric, ligand-gated cation channels with low calcium permeability and low voltage-dependent block by Mg(2+). Forms glutamatergic receptor complexes with GluN1 and GluN2 subunits which are activated by glycine binding to the GluN1 and GluN3 subunits and L-glutamate binding to GluN2 subunits. Forms excitatory glycinergic receptor complexes with GluN1 alone which are activated by glycine binding to the GluN1 and GluN3 subunits. GluN3B subunit also binds D-serine and, in the absence of glycine, activates glycinergic receptor complexes, but with lower efficacy than glycine. Each GluN3 subunit confers differential attributes to channel properties, including activation, deactivation and desensitization kinetics, pH sensitivity, Ca2(+) permeability, and binding to allosteric modulators. The protein is Glutamate receptor ionotropic, NMDA 3B of Mus musculus (Mouse).